Consider the following 399-residue polypeptide: Exodeoxyribonuclease 7 large subunit (399 aa).

It belongs to the XseA family. As to quaternary structure, heterooligomer composed of large and small subunits.

It localises to the cytoplasm. The catalysed reaction is Exonucleolytic cleavage in either 5'- to 3'- or 3'- to 5'-direction to yield nucleoside 5'-phosphates.. Bidirectionally degrades single-stranded DNA into large acid-insoluble oligonucleotides, which are then degraded further into small acid-soluble oligonucleotides. In Clostridium acetobutylicum (strain ATCC 824 / DSM 792 / JCM 1419 / IAM 19013 / LMG 5710 / NBRC 13948 / NRRL B-527 / VKM B-1787 / 2291 / W), this protein is Exodeoxyribonuclease 7 large subunit.